Reading from the N-terminus, the 177-residue chain is Dynein light chain Tctex-type 5-A (177 aa).

The protein belongs to the dynein light chain Tctex-type family.

The protein is Dynein light chain Tctex-type 5-A (Dynlt5-a) of Xenopus laevis (African clawed frog).